The primary structure comprises 488 residues: TOX high mobility group box family member 2 (488 aa).

The interval 76–114 is required for transcriptional activation; it reads YEIPPITPPNLPEPSLLHLGDHEASYHSLCHGLTPNGLL. 3 disordered regions span residues 192–258, 293–328, and 363–473; these read RSSI…PQKP, WDSL…KQPM, and SLLP…ECGI. Low complexity predominate over residues 204–216; the sequence is GSKSATPSPSSST. Residues 222 to 239 are compositionally biased toward basic and acidic residues; sequence EVHFKISGEKRPSADPGK. The Nuclear localization signal motif lies at 223-252; that stretch reads VHFKISGEKRPSADPGKKAKNPKKKKKKDP. A compositionally biased stretch (basic residues) spans 240–250; it reads KAKNPKKKKKK. The segment at residues 255–323 is a DNA-binding region (HMG box); that stretch reads PQKPVSAYAL…QANPPAKMLP (69 aa). A compositionally biased stretch (polar residues) spans 302-316; the sequence is QSSPDQGETKSTQAN. The segment covering 443 to 460 has biased composition (low complexity); that stretch reads PSSSGSCSPGPSNPTSSG.

The protein localises to the nucleus. Putative transcriptional activator involved in the hypothalamo-pituitary-gonadal system. The chain is TOX high mobility group box family member 2 (TOX2) from Homo sapiens (Human).